The sequence spans 292 residues: uncharacterized protein (292 aa).

Residues M1–T59 form the HTH lysR-type domain. The H-T-H motif DNA-binding region spans F18–S37.

This sequence belongs to the LysR transcriptional regulatory family.

This is an uncharacterized protein from Bacillus subtilis (strain 168).